We begin with the raw amino-acid sequence, 314 residues long: Hydroxyacyl-coenzyme A dehydrogenase, mitochondrial (314 aa).

The N-terminal 12 residues, 1–12 (MAFVTRQFMRSV), are a transit peptide targeting the mitochondrion. NAD(+) contacts are provided by residues 34–39 (GGGLMG) and Asp57. CoA is bound by residues Ser73 and Lys80. Lys80 carries the post-translational modification N6-succinyllysine. N6-acetyllysine; alternate is present on residues Lys81 and Lys87. Residues Lys81 and Lys87 each carry the N6-succinyllysine; alternate modification. NAD(+) is bound at residue Glu122. Position 125 is an N6-acetyllysine (Lys125). Residue Lys127 participates in NAD(+) binding. Lys127 is subject to N6-(2-hydroxyisobutyryl)lysine. Lys136 is modified (N6-acetyllysine; alternate). Lys136 carries the post-translational modification N6-succinyllysine; alternate. Residues Ser149 and Asn173 each coordinate NAD(+). Ser149 contacts CoA. The residue at position 179 (Lys179) is an N6-acetyllysine. 3 positions are modified to N6-acetyllysine; alternate: Lys185, Lys192, and Lys202. N6-succinyllysine; alternate occurs at positions 185, 192, and 202. Lys206 is subject to N6-succinyllysine. N6-acetyllysine; alternate is present on residues Lys212 and Lys241. N6-succinyllysine; alternate occurs at positions 212 and 241. Lys305 contacts NAD(+). N6-acetyllysine; alternate is present on Lys312. Lys312 carries the N6-succinyllysine; alternate modification.

Belongs to the 3-hydroxyacyl-CoA dehydrogenase family. As to quaternary structure, homodimer. Interacts with GLUD1; this interaction inhibits the activation of glutamate dehydrogenase 1 (GLUD1). Succinylation at Lys-81, adjacent to a coenzyme A binding site. Desuccinylated by SIRT5. In terms of tissue distribution, expressed in liver, kidney, pancreas, heart and skeletal muscle.

Its subcellular location is the mitochondrion matrix. It carries out the reaction a (3S)-3-hydroxyacyl-CoA + NAD(+) = a 3-oxoacyl-CoA + NADH + H(+). It catalyses the reaction (3S)-3-hydroxybutanoyl-CoA + NAD(+) = acetoacetyl-CoA + NADH + H(+). The catalysed reaction is (3S)-hydroxydecanoyl-CoA + NAD(+) = 3-oxodecanoyl-CoA + NADH + H(+). The enzyme catalyses (3S)-hydroxyhexadecanoyl-CoA + NAD(+) = 3-oxohexadecanoyl-CoA + NADH + H(+). It participates in lipid metabolism; fatty acid beta-oxidation. In terms of biological role, mitochondrial fatty acid beta-oxidation enzyme that catalyzes the third step of the beta-oxidation cycle for medium and short-chain 3-hydroxy fatty acyl-CoAs (C4 to C10). Plays a role in the control of insulin secretion by inhibiting the activation of glutamate dehydrogenase 1 (GLUD1), an enzyme that has an important role in regulating amino acid-induced insulin secretion. Plays a role in the maintenance of normal spermatogenesis through the reduction of fatty acid accumulation in the testes. The chain is Hydroxyacyl-coenzyme A dehydrogenase, mitochondrial (HADH) from Homo sapiens (Human).